Here is a 62-residue protein sequence, read N- to C-terminus: Photosystem II reaction center protein Z (62 aa).

The next 2 membrane-spanning stretches (helical) occupy residues A8–A28 and F41–I61.

This sequence belongs to the PsbZ family. As to quaternary structure, PSII is composed of 1 copy each of membrane proteins PsbA, PsbB, PsbC, PsbD, PsbE, PsbF, PsbH, PsbI, PsbJ, PsbK, PsbL, PsbM, PsbT, PsbY, PsbZ, Psb30/Ycf12, at least 3 peripheral proteins of the oxygen-evolving complex and a large number of cofactors. It forms dimeric complexes.

It is found in the plastid. The protein resides in the chloroplast thylakoid membrane. May control the interaction of photosystem II (PSII) cores with the light-harvesting antenna, regulates electron flow through the 2 photosystem reaction centers. PSII is a light-driven water plastoquinone oxidoreductase, using light energy to abstract electrons from H(2)O, generating a proton gradient subsequently used for ATP formation. The protein is Photosystem II reaction center protein Z of Daucus carota (Wild carrot).